The following is a 319-amino-acid chain: Structure-specific endonuclease subunit SLX1 (319 aa).

The region spanning 20-103 (TFYCCYLLQS…QHGYKTHYIP (84 aa)) is the GIY-YIG domain. The SLX1-type zinc-finger motif lies at 233-297 (CNLCGQCYDY…LPNFCMCPGC (65 aa)).

It belongs to the SLX1 family. As to quaternary structure, forms a heterodimer with SLX4. A divalent metal cation is required as a cofactor.

The protein resides in the nucleus. Functionally, catalytic subunit of the SLX1-SLX4 structure-specific endonuclease that resolves DNA secondary structures generated during DNA repair and recombination. Has endonuclease activity towards branched DNA substrates, introducing single-strand cuts in duplex DNA close to junctions with ss-DNA. The sequence is that of Structure-specific endonuclease subunit SLX1 from Vanderwaltozyma polyspora (strain ATCC 22028 / DSM 70294 / BCRC 21397 / CBS 2163 / NBRC 10782 / NRRL Y-8283 / UCD 57-17) (Kluyveromyces polysporus).